The sequence spans 298 residues: Probable 2-(5''-triphosphoribosyl)-3'-dephosphocoenzyme-A synthase 2 (298 aa).

Belongs to the CitG/MdcB family.

It catalyses the reaction 3'-dephospho-CoA + ATP = 2'-(5''-triphospho-alpha-D-ribosyl)-3'-dephospho-CoA + adenine. The sequence is that of Probable 2-(5''-triphosphoribosyl)-3'-dephosphocoenzyme-A synthase 2 from Salmonella typhi.